Consider the following 162-residue polypeptide: MSPVESSNVEKDIFRDTPVRFLGKRYANEVGEAFRSLVKPVVVKFSYVVAFGYVAADSVDKGFKESKKPHANDTEKAKRVAIIAVDTVLWQTFASVLIPGFTINRFCFFTNMLLEKSTKLPTNLRKWTVTALGLATIPFIVHPIDAFVEDAMNKTARKVYNY.

Helical transmembrane passes span 36–56 (SLVK…YVAA), 81–101 (AIIA…IPGF), and 128–148 (TVTA…DAFV).

This sequence belongs to the MTFP1 family.

It is found in the mitochondrion inner membrane. Its function is as follows. Involved in the mitochondrial division probably by regulating membrane fission. Loss-of-function leads to apoptosis. This chain is Mitochondrial fission process protein 1, found in Caenorhabditis briggsae.